Consider the following 85-residue polypeptide: Small ribosomal subunit protein bS16 (85 aa).

This sequence belongs to the bacterial ribosomal protein bS16 family.

In Clostridium novyi (strain NT), this protein is Small ribosomal subunit protein bS16.